The primary structure comprises 1489 residues: ZEB2-regulated ABC transporter 1 (1489 aa).

Positions 1–55 (MALPEANMSSTRSEQSSRSHDTIVGNEQPHSEKPAASAPGDQMSSDDEDEGPQTE) are disordered. Asn7 is a glycosylation site (N-linked (GlcNAc...) asparagine). Residues 44–53 (SSDDEDEGPQ) show a composition bias toward acidic residues. N-linked (GlcNAc...) asparagine glycans are attached at residues Asn70, Asn73, Asn118, Asn332, and Asn469. The 257-residue stretch at 152-408 (LGLPDMVHQM…FINLGFECPD (257 aa)) folds into the ABC transporter 1 domain. Transmembrane regions (helical) follow at residues 513–533 (LLGS…VAFI), 552–572 (GATL…EILT), 599–619 (ILVD…TLYF), 628–648 (GAFF…SGVF), and 662–682 (MVPA…VVPV). An N-linked (GlcNAc...) asparagine glycan is attached at Asn714. Residues 773–793 (GILIAMTIFNHVVYIVATEFI) form a helical membrane-spanning segment. The segment at 811-834 (PSKAKSDPEASSSRPIPTTEKNNN) is disordered. Polar residues predominate over residues 819–834 (EASSSRPIPTTEKNNN). Positions 846–1088 (FHWNDVCYDI…TLTNYFVKHG (243 aa)) constitute an ABC transporter 2 domain. 882-889 (GVSGAGKT) is a binding site for ATP. 5 helical membrane passes run 1190–1210 (ALCI…PLSL), 1218–1238 (FAIF…MPHF), 1269–1289 (IPWN…PVGF), 1307–1327 (WLLI…AIAI), and 1333–1353 (AGGN…GVLA). A glycan (N-linked (GlcNAc...) asparagine) is linked at Asn1402. The chain crosses the membrane as a helical span at residues 1457-1477 (GIGMVYIVVNIVGALFLYWLI).

Belongs to the ABC transporter superfamily. ABCG family. PDR (TC 3.A.1.205) subfamily.

It is found in the cell membrane. It localises to the vacuole membrane. Functionally, ABC transporter involved in zearalenone production. The polypeptide is ZEB2-regulated ABC transporter 1 (Gibberella zeae (strain ATCC MYA-4620 / CBS 123657 / FGSC 9075 / NRRL 31084 / PH-1) (Wheat head blight fungus)).